The chain runs to 117 residues: Putative phosphotransferase enzyme IIB component MG129 (117 aa).

A helical membrane pass occupies residues 1-21; it reads MKWLLWLGYIFSFGLLYLWIV. The region spanning 42 to 117 is the PTS EIIB type-1 domain; that stretch reads PFKVKDFVSA…ELKKKIEDEQ (76 aa).

It localises to the membrane. Functionally, the phosphoenolpyruvate-dependent sugar phosphotransferase system (PTS), a major carbohydrate active -transport system, catalyzes the phosphorylation of incoming sugar substrates concomitant with their translocation across the cell membrane. This chain is Putative phosphotransferase enzyme IIB component MG129, found in Mycoplasma genitalium (strain ATCC 33530 / DSM 19775 / NCTC 10195 / G37) (Mycoplasmoides genitalium).